Reading from the N-terminus, the 360-residue chain is Phospho-N-acetylmuramoyl-pentapeptide-transferase (360 aa).

Transmembrane regions (helical) follow at residues A26–E46, M74–G94, Y97–Y117, Y134–N154, V168–S188, G199–S219, S236–F256, V263–L283, I288–V308, and V338–K358.

The protein belongs to the glycosyltransferase 4 family. MraY subfamily. It depends on Mg(2+) as a cofactor.

It is found in the cell inner membrane. It carries out the reaction UDP-N-acetyl-alpha-D-muramoyl-L-alanyl-gamma-D-glutamyl-meso-2,6-diaminopimeloyl-D-alanyl-D-alanine + di-trans,octa-cis-undecaprenyl phosphate = di-trans,octa-cis-undecaprenyl diphospho-N-acetyl-alpha-D-muramoyl-L-alanyl-D-glutamyl-meso-2,6-diaminopimeloyl-D-alanyl-D-alanine + UMP. It functions in the pathway cell wall biogenesis; peptidoglycan biosynthesis. Its function is as follows. Catalyzes the initial step of the lipid cycle reactions in the biosynthesis of the cell wall peptidoglycan: transfers peptidoglycan precursor phospho-MurNAc-pentapeptide from UDP-MurNAc-pentapeptide onto the lipid carrier undecaprenyl phosphate, yielding undecaprenyl-pyrophosphoryl-MurNAc-pentapeptide, known as lipid I. This is Phospho-N-acetylmuramoyl-pentapeptide-transferase from Shewanella baltica (strain OS195).